Consider the following 802-residue polypeptide: Leucine--tRNA ligase (802 aa).

The 'HIGH' region motif lies at 40–51 (PYPSGAGLHVGH). Positions 576–580 (KMSKS) match the 'KMSKS' region motif. Position 579 (K579) interacts with ATP.

It belongs to the class-I aminoacyl-tRNA synthetase family.

It localises to the cytoplasm. It carries out the reaction tRNA(Leu) + L-leucine + ATP = L-leucyl-tRNA(Leu) + AMP + diphosphate. The protein is Leucine--tRNA ligase of Bacillus cytotoxicus (strain DSM 22905 / CIP 110041 / 391-98 / NVH 391-98).